Here is a 228-residue protein sequence, read N- to C-terminus: Cytidylate kinase (228 aa).

12–20 (GPASAGKST) is an ATP binding site.

The protein belongs to the cytidylate kinase family. Type 1 subfamily.

The protein localises to the cytoplasm. The catalysed reaction is CMP + ATP = CDP + ADP. It catalyses the reaction dCMP + ATP = dCDP + ADP. This Lactiplantibacillus plantarum (strain ATCC BAA-793 / NCIMB 8826 / WCFS1) (Lactobacillus plantarum) protein is Cytidylate kinase.